We begin with the raw amino-acid sequence, 123 residues long: Putative trans-acting factor (123 aa).

2 disordered regions span residues 1–38 (MEAVIREGGSLPQVRSASRNQQRSGESTKGRKWEKQLR) and 100–123 (VTHLGGRNSQGRSQGTRVWPLGRP). Residues 13 to 25 (QVRSASRNQQRSG) are compositionally biased toward polar residues. The span at 26-38 (ESTKGRKWEKQLR) shows a compositional bias: basic and acidic residues. The segment covering 106 to 115 (RNSQGRSQGT) has biased composition (polar residues).

In Avian leukosis virus subgroup A (isolate RSA) (ALV-A RSA), this protein is Putative trans-acting factor (trans-acting factor).